Here is a 141-residue protein sequence, read N- to C-terminus: MLTAEDKKLIQQAWEKAASHQEEFGAEALTRMFTTYPQTKTYFPHFDLSPGSDQVRGHGKKVLGALGNAVKNVDNLSQAMSELSNLHAYNLRVDPVNFKLLSQCIQVVLAAHLGKDYTPEVHAAFDKFLSAVSAVLAEKYR.

Residues 1-141 form the Globin domain; it reads MLTAEDKKLI…VSAVLAEKYR (141 aa). Heme b-binding residues include His-58 and His-87.

It belongs to the globin family. In terms of assembly, heterotetramer of two alpha-D chains and two beta chains. As to expression, red blood cells.

Involved in oxygen transport from the lung to the various peripheral tissues. The sequence is that of Hemoglobin subunit alpha-D (HBAD) from Meleagris gallopavo (Wild turkey).